The sequence spans 137 residues: Venom allergen 4 (137 aa).

Positions Met1–Ala19 are cleaved as a signal peptide.

It belongs to the ant venom allergen 2/4 family. In terms of assembly, monomer. Expressed by the venom gland.

It localises to the secreted. The sequence is that of Venom allergen 4 from Solenopsis invicta (Red imported fire ant).